Consider the following 112-residue polypeptide: DNA-binding protein TGAM_1196 (112 aa).

The protein belongs to the PDCD5 family.

The polypeptide is DNA-binding protein TGAM_1196 (Thermococcus gammatolerans (strain DSM 15229 / JCM 11827 / EJ3)).